The following is a 309-amino-acid chain: NAD kinase (309 aa).

The active-site Proton acceptor is D89. NAD(+) contacts are provided by residues 89-90 (DG), 163-164 (NE), H174, R191, D193, and 204-209 (TAYALS).

It belongs to the NAD kinase family. It depends on a divalent metal cation as a cofactor.

The protein resides in the cytoplasm. It carries out the reaction NAD(+) + ATP = ADP + NADP(+) + H(+). In terms of biological role, involved in the regulation of the intracellular balance of NAD and NADP, and is a key enzyme in the biosynthesis of NADP. Catalyzes specifically the phosphorylation on 2'-hydroxyl of the adenosine moiety of NAD to yield NADP. The polypeptide is NAD kinase (Shewanella sp. (strain MR-4)).